A 180-amino-acid polypeptide reads, in one-letter code: Sec-independent protein translocase protein TatB (180 aa).

Residues 1 to 21 (MFDIGWSELLVIGVVALIAIG) form a helical membrane-spanning segment. The disordered stretch occupies residues 95 to 180 (IEGVDKPVES…AERLKDAKAS (86 aa)). A compositionally biased stretch (low complexity) spans 103-123 (ESQPAASAAPETSATVEAPAT). The segment covering 170 to 180 (EAERLKDAKAS) has biased composition (basic and acidic residues).

This sequence belongs to the TatB family. As to quaternary structure, the Tat system comprises two distinct complexes: a TatABC complex, containing multiple copies of TatA, TatB and TatC subunits, and a separate TatA complex, containing only TatA subunits. Substrates initially bind to the TatABC complex, which probably triggers association of the separate TatA complex to form the active translocon.

The protein localises to the cell inner membrane. Functionally, part of the twin-arginine translocation (Tat) system that transports large folded proteins containing a characteristic twin-arginine motif in their signal peptide across membranes. Together with TatC, TatB is part of a receptor directly interacting with Tat signal peptides. TatB may form an oligomeric binding site that transiently accommodates folded Tat precursor proteins before their translocation. This chain is Sec-independent protein translocase protein TatB, found in Bradyrhizobium sp. (strain BTAi1 / ATCC BAA-1182).